We begin with the raw amino-acid sequence, 412 residues long: DnaJ homolog subfamily A member 2 (412 aa).

One can recognise a J domain in the interval 8 to 70 (KLYDILGVPP…EKRELYDRYG (63 aa)). An N6-acetyllysine modification is found at K39. Phosphoserine is present on residues S78 and S123. The CR-type zinc finger occupies 130–214 (GKTTKLQLSK…CEGKKVIKEV (85 aa)). K134 participates in a covalent cross-link: Glycyl lysine isopeptide (Lys-Gly) (interchain with G-Cter in SUMO2). Residues C143 and C146 each coordinate Zn(2+). The stretch at 143 to 150 (CSACSGQG) is one CXXCXGXG motif repeat. K152 carries the post-translational modification N6-acetyllysine. 6 residues coordinate Zn(2+): C159, C162, C186, C189, C202, and C205. CXXCXGXG motif repeat units follow at residues 159-166 (CSACRGRG), 186-193 (CSDCNGEG), and 202-209 (CKKCEGKK). The interval 365 to 412 (IGETEEVELQEFDSTRGSGGGQRREAYNDSSDEESSSHHGPGVQCAHQ) is disordered. Y391 carries the phosphotyrosine modification. Phosphoserine occurs at positions 394 and 395. At C409 the chain carries Cysteine methyl ester. C409 carries S-farnesyl cysteine lipidation. A propeptide spans 410-412 (AHQ) (removed in mature form).

The protein resides in the membrane. Co-chaperone of Hsc70. Stimulates ATP hydrolysis and the folding of unfolded proteins mediated by HSPA1A/B (in vitro). The chain is DnaJ homolog subfamily A member 2 (Dnaja2) from Rattus norvegicus (Rat).